The primary structure comprises 274 residues: Nitrogenase iron protein (274 aa).

8 to 15 (GKGGIGKS) contributes to the ATP binding site. C94 is a binding site for [4Fe-4S] cluster. At R97 the chain carries ADP-ribosylarginine; by dinitrogenase reductase ADP-ribosyltransferase. C131 provides a ligand contact to [4Fe-4S] cluster.

Belongs to the NifH/BchL/ChlL family. Homodimer. [4Fe-4S] cluster serves as cofactor. In terms of processing, the reversible ADP-ribosylation of Arg-97 inactivates the nitrogenase reductase and regulates nitrogenase activity.

The catalysed reaction is N2 + 8 reduced [2Fe-2S]-[ferredoxin] + 16 ATP + 16 H2O = H2 + 8 oxidized [2Fe-2S]-[ferredoxin] + 2 NH4(+) + 16 ADP + 16 phosphate + 6 H(+). Functionally, the key enzymatic reactions in nitrogen fixation are catalyzed by the nitrogenase complex, which has 2 components: the iron protein and the molybdenum-iron protein. The chain is Nitrogenase iron protein from Desulfatibacillum aliphaticivorans.